An 834-amino-acid chain; its full sequence is Periplasmic nitrate reductase (834 aa).

The segment at residues 1-29 is a signal peptide (tat-type signal); that stretch reads MKLSRREFAKANAAAIAAAAAGLPLASTA. The 4Fe-4S Mo/W bis-MGD-type domain maps to 41–97; sequence LDWNKAPCRFCGTGCSVMVATRDNRVVATHGDVKAEVNRGLNCVKGYFLSKIMYGVD. Residues C48, C51, C55, and C83 each contribute to the [4Fe-4S] cluster site. Mo-bis(molybdopterin guanine dinucleotide) contacts are provided by residues K85, Q152, N177, C181, 214–221, 245–249, 264–266, M375, Q379, N485, 511–512, K534, D561, and 721–730; these read WGSNMAEM, STFEH, QTD, SD, and TGRVLEHWHT. Position 797 (F797) interacts with substrate. Mo-bis(molybdopterin guanine dinucleotide) is bound by residues N805 and K822.

It belongs to the prokaryotic molybdopterin-containing oxidoreductase family. NasA/NapA/NarB subfamily. As to quaternary structure, component of the periplasmic nitrate reductase NapAB complex composed of NapA and NapB. The cofactor is [4Fe-4S] cluster. Requires Mo-bis(molybdopterin guanine dinucleotide) as cofactor. Predicted to be exported by the Tat system. The position of the signal peptide cleavage has not been experimentally proven.

It is found in the periplasm. It catalyses the reaction 2 Fe(II)-[cytochrome] + nitrate + 2 H(+) = 2 Fe(III)-[cytochrome] + nitrite + H2O. In terms of biological role, catalytic subunit of the periplasmic nitrate reductase complex NapAB. Receives electrons from NapB and catalyzes the reduction of nitrate to nitrite. This chain is Periplasmic nitrate reductase, found in Ectopseudomonas mendocina (strain ymp) (Pseudomonas mendocina).